A 326-amino-acid chain; its full sequence is Ribose-phosphate pyrophosphokinase 4 (326 aa).

Positions 140, 142, 151, and 155 each coordinate Mg(2+).

The protein belongs to the ribose-phosphate pyrophosphokinase family.

It is found in the cytoplasm. The enzyme catalyses D-ribose 5-phosphate + ATP = 5-phospho-alpha-D-ribose 1-diphosphate + AMP + H(+). Its pathway is metabolic intermediate biosynthesis; 5-phospho-alpha-D-ribose 1-diphosphate biosynthesis; 5-phospho-alpha-D-ribose 1-diphosphate from D-ribose 5-phosphate (route I): step 1/1. In terms of biological role, 5-phosphoribose 1-diphosphate synthase involved in nucleotide, histidine, and tryptophan biosynthesis. Active in heteromultimeric complexes with other 5-phosphoribose 1-diphosphate synthases (PRS2, PRS3, PRS4 and PRS5). This chain is Ribose-phosphate pyrophosphokinase 4 (PRS4), found in Saccharomyces cerevisiae (strain ATCC 204508 / S288c) (Baker's yeast).